The following is a 193-amino-acid chain: Holliday junction branch migration complex subunit RuvA (193 aa).

Residues 1-64 (MIGRIAGTLI…EDAHLLYGFG (64 aa)) form a domain I region. A domain II region spans residues 65–143 (TAAERETFRQ…ADLGTVPGGP (79 aa)). The segment at 144-151 (AVSDDAVD) is flexible linker. Residues 151–193 (DVLNALLALGYSDKEAALAIKQVPAGTGVSEGIKLALKALSKG) are domain III.

This sequence belongs to the RuvA family. In terms of assembly, homotetramer. Forms an RuvA(8)-RuvB(12)-Holliday junction (HJ) complex. HJ DNA is sandwiched between 2 RuvA tetramers; dsDNA enters through RuvA and exits via RuvB. An RuvB hexamer assembles on each DNA strand where it exits the tetramer. Each RuvB hexamer is contacted by two RuvA subunits (via domain III) on 2 adjacent RuvB subunits; this complex drives branch migration. In the full resolvosome a probable DNA-RuvA(4)-RuvB(12)-RuvC(2) complex forms which resolves the HJ.

The protein localises to the cytoplasm. In terms of biological role, the RuvA-RuvB-RuvC complex processes Holliday junction (HJ) DNA during genetic recombination and DNA repair, while the RuvA-RuvB complex plays an important role in the rescue of blocked DNA replication forks via replication fork reversal (RFR). RuvA specifically binds to HJ cruciform DNA, conferring on it an open structure. The RuvB hexamer acts as an ATP-dependent pump, pulling dsDNA into and through the RuvAB complex. HJ branch migration allows RuvC to scan DNA until it finds its consensus sequence, where it cleaves and resolves the cruciform DNA. This Ralstonia pickettii (strain 12J) protein is Holliday junction branch migration complex subunit RuvA.